The chain runs to 199 residues: Prolactin (199 aa).

Cysteine 4 and cysteine 11 form a disulfide bridge. Residues serine 26, serine 34, and serine 90 each carry the phosphoserine modification. Cystine bridges form between cysteine 58-cysteine 174 and cysteine 191-cysteine 199.

It belongs to the somatotropin/prolactin family. Interacts with PRLR.

It localises to the secreted. Its function is as follows. Prolactin acts primarily on the mammary gland by promoting lactation. The protein is Prolactin (PRL) of Balaenoptera borealis (Sei whale).